The chain runs to 367 residues: Leucine carboxyl methyltransferase 1 (367 aa).

S-adenosyl-L-methionine is bound by residues arginine 84, glycine 109, aspartate 132, 187–188 (DL), and glutamate 212.

It belongs to the methyltransferase superfamily. LCMT family.

The catalysed reaction is [phosphatase 2A protein]-C-terminal L-leucine + S-adenosyl-L-methionine = [phosphatase 2A protein]-C-terminal L-leucine methyl ester + S-adenosyl-L-homocysteine. Its function is as follows. Methylates the carboxyl group of the C-terminal leucine residue of protein phosphatase 2A catalytic subunits to form alpha-leucine ester residues. This Candida albicans (strain SC5314 / ATCC MYA-2876) (Yeast) protein is Leucine carboxyl methyltransferase 1 (PPM1).